The chain runs to 1805 residues: Obscurin-like protein 1 (1805 aa).

The residue at position 10 (serine 10) is a Phosphoserine. An Ig-like 1 domain is found at 12–100; the sequence is PCFLRFPRPV…GEAYAAAAVT (89 aa). An interaction with TTN region spans residues 17–19; it reads FPR. Cysteine 33 and cysteine 84 are disulfide-bonded. The interaction with TTN stretch occupies residues 85–94; it reads RARNAAGEAY. Positions 104–122 are enriched in pro residues; it reads PPAPEPEPQSSECPPPPPG. The interval 104–131 is disordered; it reads PPAPEPEPQSSECPPPPPGTGEGAPVFL. Ig-like domains follow at residues 128–225, 240–330, and 339–425; these read PVFL…ALLQ, PPVR…QTLS, and PRLR…ANVT. 3 disulfides stabilise this stretch: cysteine 149–cysteine 209, cysteine 267–cysteine 319, and cysteine 362–cysteine 412. In terms of domain architecture, Fibronectin type-III spans 517–615; the sequence is PPGPPVLVEM…FNGSAHLVPT (99 aa). Ig-like domains follow at residues 720-800, 804-891, 902-982, 986-1075, 1078-1165, 1176-1261, 1266-1351, 1355-1442, 1536-1628, and 1702-1798; these read PQDK…FSVT, PPVH…FTVT, PNGK…FTIT, PPVR…VTVT, PERI…FNVS, PEAV…FNVQ, PPVK…ARLH, TELL…ARLS, PVTI…REVS, and PAQS…ADTQ. 6 disulfides stabilise this stretch: cysteine 738–cysteine 788, cysteine 829–cysteine 879, cysteine 920–cysteine 970, cysteine 1011–cysteine 1061, cysteine 1103–cysteine 1153, and cysteine 1195–cysteine 1245. Cysteine 1558 and cysteine 1608 are disulfide-bonded.

As to quaternary structure, component of the 3M complex, composed of core components CUL7, CCDC8 and OBSL1. Interacts with CCDC8. Interacts with CUL7; the interaction is direct. Interacts with FBXW8. Interacts (via N-terminal Ig-like domain) with TTN/titin (via C-terminal Ig-like domain); the interaction is direct. Expressed in granule neurons, with levels decreasing with neuronal maturation.

Its subcellular location is the cytoplasm. It localises to the perinuclear region. The protein resides in the golgi apparatus. Core component of the 3M complex, a complex required to regulate microtubule dynamics and genome integrity. It is unclear how the 3M complex regulates microtubules, it could act by controlling the level of a microtubule stabilizer. Acts as a regulator of the Cul7-RING(FBXW8) ubiquitin-protein ligase, playing a critical role in the ubiquitin ligase pathway that regulates Golgi morphogenesis and dendrite patterning in brain. Required to localize CUL7 to the Golgi apparatus in neurons. The chain is Obscurin-like protein 1 (Obsl1) from Rattus norvegicus (Rat).